An 80-amino-acid polypeptide reads, in one-letter code: uncharacterized protein (80 aa).

Residues 1-20 (MVAADHRALGSNKSYPASQT) form the signal peptide. The disordered stretch occupies residues 1 to 21 (MVAADHRALGSNKSYPASQTA). Polar residues predominate over residues 11–21 (SNKSYPASQTA).

This is an uncharacterized protein from Mycobacterium tuberculosis (strain CDC 1551 / Oshkosh).